The following is a 190-amino-acid chain: Elongation factor P (190 aa).

Lys-34 is subject to N6-(3,6-diaminohexanoyl)-5-hydroxylysine.

Belongs to the elongation factor P family. Post-translationally, may be beta-lysylated on the epsilon-amino group of Lys-34 by the combined action of EpmA and EpmB, and then hydroxylated on the C5 position of the same residue by EpmC (if this protein is present). Lysylation is critical for the stimulatory effect of EF-P on peptide-bond formation. The lysylation moiety may extend toward the peptidyltransferase center and stabilize the terminal 3-CCA end of the tRNA. Hydroxylation of the C5 position on Lys-34 may allow additional potential stabilizing hydrogen-bond interactions with the P-tRNA.

The protein localises to the cytoplasm. It participates in protein biosynthesis; polypeptide chain elongation. Involved in peptide bond synthesis. Alleviates ribosome stalling that occurs when 3 or more consecutive Pro residues or the sequence PPG is present in a protein, possibly by augmenting the peptidyl transferase activity of the ribosome. Modification of Lys-34 is required for alleviation. The protein is Elongation factor P of Psychrobacter arcticus (strain DSM 17307 / VKM B-2377 / 273-4).